The primary structure comprises 170 residues: MDFKQHIAIVPDYPKEGIVFKDITPLMNDGKAYKAATDAIVEYAKERDIDVVVGPEARGFIIGCPVSYALEVGFAPVRKLGKLPREVITVDYGKEYGKDVLTIHKDAIKPGQRVLITDDLLATGGTIEATIKLVEELGGVVAGIAFLVELTYLDGRKMLDGYDVLVLEKY.

This sequence belongs to the purine/pyrimidine phosphoribosyltransferase family. As to quaternary structure, homodimer.

Its subcellular location is the cytoplasm. The enzyme catalyses AMP + diphosphate = 5-phospho-alpha-D-ribose 1-diphosphate + adenine. It functions in the pathway purine metabolism; AMP biosynthesis via salvage pathway; AMP from adenine: step 1/1. Functionally, catalyzes a salvage reaction resulting in the formation of AMP, that is energically less costly than de novo synthesis. The chain is Adenine phosphoribosyltransferase from Bacillus cereus (strain G9842).